The following is a 480-amino-acid chain: ATP synthase subunit beta (480 aa).

ATP is bound at residue 152–159 (GGAGVGKT).

It belongs to the ATPase alpha/beta chains family. F-type ATPases have 2 components, CF(1) - the catalytic core - and CF(0) - the membrane proton channel. CF(1) has five subunits: alpha(3), beta(3), gamma(1), delta(1), epsilon(1). CF(0) has three main subunits: a(1), b(2) and c(9-12). The alpha and beta chains form an alternating ring which encloses part of the gamma chain. CF(1) is attached to CF(0) by a central stalk formed by the gamma and epsilon chains, while a peripheral stalk is formed by the delta and b chains.

Its subcellular location is the cell membrane. The enzyme catalyses ATP + H2O + 4 H(+)(in) = ADP + phosphate + 5 H(+)(out). Functionally, produces ATP from ADP in the presence of a proton gradient across the membrane. The catalytic sites are hosted primarily by the beta subunits. The protein is ATP synthase subunit beta of Wolbachia sp. subsp. Brugia malayi (strain TRS).